The sequence spans 338 residues: Methionine aminopeptidase 1D, mitochondrial (338 aa).

The transit peptide at 1–47 directs the protein to the mitochondrion; the sequence is MAAPCAAQCLYRTGGLRLLQRISRLPHCHKDASLAHQCQFHRSFFWR. Histidine 164 contacts substrate. A divalent metal cation is bound by residues aspartate 181, aspartate 192, and histidine 255. A substrate-binding site is contributed by histidine 262. 2 residues coordinate a divalent metal cation: glutamate 287 and glutamate 318.

It belongs to the peptidase M24A family. Methionine aminopeptidase type 1 subfamily. Co(2+) is required as a cofactor. Zn(2+) serves as cofactor. Requires Mn(2+) as cofactor. It depends on Fe(2+) as a cofactor.

It is found in the mitochondrion. The enzyme catalyses Release of N-terminal amino acids, preferentially methionine, from peptides and arylamides.. Removes the N-terminal methionine from nascent proteins. The N-terminal methionine is often cleaved when the second residue in the primary sequence is small and uncharged (Met-Ala-, Cys, Gly, Pro, Ser, Thr, or Val). Requires deformylation of the N(alpha)-formylated initiator methionine before it can be hydrolyzed. This chain is Methionine aminopeptidase 1D, mitochondrial (metap1d), found in Danio rerio (Zebrafish).